Reading from the N-terminus, the 232-residue chain is Ubiquinone biosynthesis O-methyltransferase (232 aa).

Positions 36, 55, 76, and 120 each coordinate S-adenosyl-L-methionine.

This sequence belongs to the methyltransferase superfamily. UbiG/COQ3 family.

It catalyses the reaction a 3-demethylubiquinol + S-adenosyl-L-methionine = a ubiquinol + S-adenosyl-L-homocysteine + H(+). The catalysed reaction is a 3-(all-trans-polyprenyl)benzene-1,2-diol + S-adenosyl-L-methionine = a 2-methoxy-6-(all-trans-polyprenyl)phenol + S-adenosyl-L-homocysteine + H(+). Its pathway is cofactor biosynthesis; ubiquinone biosynthesis. O-methyltransferase that catalyzes the 2 O-methylation steps in the ubiquinone biosynthetic pathway. This is Ubiquinone biosynthesis O-methyltransferase from Azotobacter vinelandii (strain DJ / ATCC BAA-1303).